A 982-amino-acid chain; its full sequence is E3 ubiquitin-protein ligase CBL-B (982 aa).

Residues 35 to 167 are 4H; it reads PPKQAAADRR…KAIFPNGQFQ (133 aa). Residues 35–343 form the Cbl-PTB domain; it reads PPKQAAADRR…GRSYNPDLTG (309 aa). Residues 168-240 form an EF-hand-like region; it reads GDNFRITKAD…FEFDIFTRLF (73 aa). Asp221, Thr223, Asn225, Tyr227, and Glu232 together coordinate Ca(2+). Residues 241 to 343 form an SH2-like region; that stretch reads QPWGSILRNW…GRSYNPDLTG (103 aa). Phosphoserine; by PKC/PRKCQ is present on Ser282. Residue Arg286 coordinates 4-O-phospho-L-tyrosine. A linker region spans residues 344–372; it reads LCEPTPHDHIKVTQEQYELYCEMGSTFQL. Phosphotyrosine is present on Tyr363. The segment at 373-412 adopts an RING-type zinc-finger fold; that stretch reads CKICAENDKDVKIEPCGHLMCTSCLTAWQESDGQGCPFCR. A disordered region spans residues 465–588; the sequence is ASVRKCTDRQ…SVPSRDQPMP (124 aa). Positions 473–486 are enriched in polar residues; sequence RQNSPVTSPGSSPL. Phosphoserine occurs at positions 476, 480, 484, 521, 525, and 529. The interval 543–567 is interaction with VAV1; the sequence is PLPAPPPPLRDPPPPPERPPPIPPD. Over residues 544–566 the composition is skewed to pro residues; that stretch reads LPAPPPPLRDPPPPPERPPPIPP. Ser633 carries the phosphoserine modification. 2 positions are modified to phosphotyrosine: Tyr664 and Tyr708. Disordered regions lie at residues 702 to 723 and 745 to 929; these read EDDD…SQPS and THGA…EAAL. The span at 714 to 723 shows a compositional bias: polar residues; the sequence is HPVSLNSQPS. A compositionally biased stretch (pro residues) spans 819-828; that stretch reads PSLPPPPPPA. Residues 838 to 848 are compositionally biased toward low complexity; that stretch reads PPGSSSRPSSG. The segment covering 884–899 has biased composition (polar residues); that stretch reads RASQDYDQLPSSSDGS. Tyr889 bears the Phosphotyrosine mark. The segment at 891-927 is interaction with SH3KBP1; that stretch reads QLPSSSDGSQAPARPPKPRPRRTAPEIHHRKPHGPEA. Residues 906-922 are compositionally biased toward basic residues; that stretch reads PKPRPRRTAPEIHHRKP. Positions 931-970 constitute a UBA domain; that stretch reads NVDAKIAKLMGEGYAFEEVKRALEIAQNNVEVARSILREF.

As to quaternary structure, interacts with SH3 domain-containing proteins LCK, CRK and SORBS1. Interacts with LCP2 and ZAP70. Interacts with CBL. Interacts with SH3 domain-containing proteins VAV1, FYN, FGR, PLCG1, GRB2, CRKL, PIK3R1 and SH3KBP1/CIN85. Identified in heterotrimeric complexes with SH3KBP1/CIN85, CD2AP and ARHGEF7, where one CBLB peptide binds two copies of the other protein. Interacts with poly-ubiquitinated proteins. Dimerization is required for the binding of poly-ubiquitin, but not for the binding of mono-ubiquitin. Interacts with EGFR (phosphorylated). Interacts with IFT20. Phosphorylated on tyrosine and serine residues upon TCR or BCR activation. Phosphorylated on Tyr-664 and Tyr-708 in adipocytes following insulin stimulation. Post-translationally, auto-ubiquitinated upon EGF-mediated cell activation or upon T-cell costimulation by CD28; which promotes proteasomal degradation.

The protein resides in the cytoplasm. It catalyses the reaction S-ubiquitinyl-[E2 ubiquitin-conjugating enzyme]-L-cysteine + [acceptor protein]-L-lysine = [E2 ubiquitin-conjugating enzyme]-L-cysteine + N(6)-ubiquitinyl-[acceptor protein]-L-lysine.. Its pathway is protein modification; protein ubiquitination. In terms of biological role, E3 ubiquitin-protein ligase which accepts ubiquitin from specific E2 ubiquitin-conjugating enzymes, and transfers it to substrates, generally promoting their degradation by the proteasome. Negatively regulates TCR (T-cell receptor), BCR (B-cell receptor) and FCER1 (high affinity immunoglobulin epsilon receptor) signal transduction pathways. In naive T-cells, inhibits VAV1 activation upon TCR engagement and imposes a requirement for CD28 costimulation for proliferation and IL-2 production. Also acts by promoting PIK3R1/p85 ubiquitination, which impairs its recruitment to the TCR and subsequent activation. In activated T-cells, inhibits PLCG1 activation and calcium mobilization upon restimulation and promotes anergy. In B-cells, acts by ubiquitinating SYK and promoting its proteasomal degradation. Slightly promotes SRC ubiquitination. May be involved in EGFR ubiquitination and internalization. May be functionally coupled with the E2 ubiquitin-protein ligase UB2D3. In association with CBL, required for proper feedback inhibition of ciliary platelet-derived growth factor receptor-alpha (PDGFRA) signaling pathway via ubiquitination and internalization of PDGFRA. This is E3 ubiquitin-protein ligase CBL-B (Cblb) from Mus musculus (Mouse).